We begin with the raw amino-acid sequence, 193 residues long: UPF0301 protein Bfl251 (193 aa).

This sequence belongs to the UPF0301 (AlgH) family.

The sequence is that of UPF0301 protein Bfl251 from Blochmanniella floridana.